Here is a 261-residue protein sequence, read N- to C-terminus: Thiamine thiazole synthase (261 aa).

NAD(+)-binding positions include serine 40, 59 to 60, glycine 67, valine 133, and 159 to 161; these read ER and HID. Aspartate 161 and histidine 176 together coordinate Fe cation. Serine 179 and methionine 226 together coordinate NAD(+). Residue arginine 236 coordinates glycine.

It belongs to the THI4 family. In terms of assembly, homooctamer; tetramer of dimers. The cofactor is Fe(2+).

It carries out the reaction hydrogen sulfide + glycine + NAD(+) = ADP-5-ethyl-4-methylthiazole-2-carboxylate + nicotinamide + 3 H2O + H(+). Its pathway is cofactor biosynthesis; thiamine diphosphate biosynthesis. Functionally, involved in the biosynthesis of the thiazole moiety of thiamine. Catalyzes the conversion of NAD and glycine to adenosine diphosphate 5-(2-hydroxyethyl)-4-methylthiazole-2-carboxylate (ADT), an adenylated thiazole intermediate, using free sulfide as a source of sulfur. In Methanococcus maripaludis (strain C6 / ATCC BAA-1332), this protein is Thiamine thiazole synthase.